The primary structure comprises 273 residues: Undecaprenyl-diphosphatase (273 aa).

7 helical membrane passes run 13–35 (GLVE…VFGN), 45–62 (VFEI…VFEY), 82–102 (FVLN…LFDK), 108–128 (LFNP…ILWV), 186–206 (TEFS…YDVL), 219–239 (LILI…KALL), and 250–270 (FAYY…SGWI).

This sequence belongs to the UppP family.

It localises to the cell inner membrane. The catalysed reaction is di-trans,octa-cis-undecaprenyl diphosphate + H2O = di-trans,octa-cis-undecaprenyl phosphate + phosphate + H(+). Its function is as follows. Catalyzes the dephosphorylation of undecaprenyl diphosphate (UPP). Confers resistance to bacitracin. In Neisseria gonorrhoeae (strain ATCC 700825 / FA 1090), this protein is Undecaprenyl-diphosphatase.